A 71-amino-acid polypeptide reads, in one-letter code: Phosphatidylinositol N-acetylglucosaminyltransferase subunit Y (71 aa).

Residues 1 to 3 are Cytoplasmic-facing; the sequence is MFL. A helical transmembrane segment spans residues 4-26; sequence SLPTLTVLIPLVSLAGLFYSASV. The Lumenal portion of the chain corresponds to 27 to 44; that stretch reads EENFPQGCTSTASLCFYS. Residues 45-65 form a helical membrane-spanning segment; sequence LLLPITIPVYVFFHLWTWMGI. Topologically, residues 66–71 are cytoplasmic; sequence KLFRHN.

In terms of assembly, component of the glycosylphosphatidylinositol-N-acetylglucosaminyltransferase (GPI-GnT) complex composed at least by PIGA, PIGC, PIGH, PIGP, PIGQ, PIGY and DPM2. Interacts directly with PIGA; this interaction regulates glycosylphosphatidylinositol-N-acetylglucosaminyltransferase activity. Does not interact with Ras proteins.

The protein localises to the endoplasmic reticulum membrane. It functions in the pathway glycolipid biosynthesis; glycosylphosphatidylinositol-anchor biosynthesis. In terms of biological role, part of the glycosylphosphatidylinositol-N-acetylglucosaminyltransferase (GPI-GnT) complex that catalyzes the transfer of N-acetylglucosamine from UDP-N-acetylglucosamine to phosphatidylinositol and participates in the first step of GPI biosynthesis. May act by regulating the catalytic subunit PIGA. In Homo sapiens (Human), this protein is Phosphatidylinositol N-acetylglucosaminyltransferase subunit Y.